A 446-amino-acid polypeptide reads, in one-letter code: Forkhead box protein F2 (446 aa).

Pro residues predominate over residues 1–18; sequence MSTEGGPPPPPPRPPPAP. Positions 1–97 are disordered; the sequence is MSTEGGPPPP…TKKATSGLRR (97 aa). Residues 45-78 are compositionally biased toward low complexity; it reads STSSSSSSSSASCASSSSNSVSASAGACKSAASS. A DNA-binding region (fork-head) is located at residues 100-194; the sequence is KPPYSYIALI…EEGSFRRRPR (95 aa). 3 disordered regions span residues 257–278, 304–325, and 340–371; these read AGAPGHAHPHHLHHHHVPHMSP, GGGGGDYGPDSSSSPVPSSPAM, and AHWSSPGASPYLKQPPALTPSSNPAASAGLHP. Over residues 263-274 the composition is skewed to basic residues; the sequence is AHPHHLHHHHVP. Residues 311–325 show a composition bias toward low complexity; the sequence is GPDSSSSPVPSSPAM.

Interacts with the transcription factors TBP and TFIIB. Uniquely expressed in the bronchiolar epithelium and in type II pneumocytes.

Its subcellular location is the nucleus. In terms of biological role, probable transcription activator for a number of lung-specific genes. Mediates up-regulation of the E3 ligase IRF2BPL and drives ubiquitination and degradation of CTNNB1. This chain is Forkhead box protein F2 (Foxf2), found in Mus musculus (Mouse).